The following is a 521-amino-acid chain: Bifunctional purine biosynthesis protein PurH (521 aa).

In terms of domain architecture, MGS-like spans 1–145 (MIKQALISVS…KNHRDVTVVV (145 aa)).

It belongs to the PurH family.

The enzyme catalyses (6R)-10-formyltetrahydrofolate + 5-amino-1-(5-phospho-beta-D-ribosyl)imidazole-4-carboxamide = 5-formamido-1-(5-phospho-D-ribosyl)imidazole-4-carboxamide + (6S)-5,6,7,8-tetrahydrofolate. The catalysed reaction is IMP + H2O = 5-formamido-1-(5-phospho-D-ribosyl)imidazole-4-carboxamide. Its pathway is purine metabolism; IMP biosynthesis via de novo pathway; 5-formamido-1-(5-phospho-D-ribosyl)imidazole-4-carboxamide from 5-amino-1-(5-phospho-D-ribosyl)imidazole-4-carboxamide (10-formyl THF route): step 1/1. It functions in the pathway purine metabolism; IMP biosynthesis via de novo pathway; IMP from 5-formamido-1-(5-phospho-D-ribosyl)imidazole-4-carboxamide: step 1/1. The sequence is that of Bifunctional purine biosynthesis protein PurH from Burkholderia lata (strain ATCC 17760 / DSM 23089 / LMG 22485 / NCIMB 9086 / R18194 / 383).